Reading from the N-terminus, the 139-residue chain is Large ribosomal subunit protein uL16 (139 aa).

The protein belongs to the universal ribosomal protein uL16 family. As to quaternary structure, part of the 50S ribosomal subunit.

Its function is as follows. Binds 23S rRNA and is also seen to make contacts with the A and possibly P site tRNAs. In Parvibaculum lavamentivorans (strain DS-1 / DSM 13023 / NCIMB 13966), this protein is Large ribosomal subunit protein uL16.